The sequence spans 439 residues: Xylose isomerase (439 aa).

Catalysis depends on residues His-101 and Asp-104. Mg(2+)-binding residues include Glu-232, Glu-268, His-271, Asp-296, Asp-307, Asp-309, and Asp-339.

The protein belongs to the xylose isomerase family. Homotetramer. It depends on Mg(2+) as a cofactor.

The protein resides in the cytoplasm. The enzyme catalyses alpha-D-xylose = alpha-D-xylulofuranose. The sequence is that of Xylose isomerase from Pectobacterium atrosepticum (strain SCRI 1043 / ATCC BAA-672) (Erwinia carotovora subsp. atroseptica).